Reading from the N-terminus, the 867-residue chain is Mitochondrial escape protein 2 (867 aa).

Disordered regions lie at residues 1–20 (MISAHILSRQATRPGHRGPR) and 44–66 (RTTRAWESTSSSTASTGSHKESG). The N-terminal 41 residues, 1 to 41 (MISAHILSRQATRPGHRGPRFTTHSTALLVQRSLGQGLPLA), are a transit peptide targeting the mitochondrion. Residues 42–308 (HRRTTRAWES…IWAWFTSHPR (267 aa)) are Mitochondrial matrix-facing. Positions 48 to 59 (AWESTSSSTAST) are enriched in low complexity. Residues 203–293 (SRIRVEFVAA…TKLRLSYEQR (91 aa)) enclose the RRM domain. The chain crosses the membrane as a helical span at residues 309 to 329 (IVIPLVAALIAAFTVAVFDPI). Topologically, residues 330-867 (REFFVKAHVQ…GVVKGQMVKG (538 aa)) are mitochondrial intermembrane. Residues 614-639 (FAHDGQQKDSESGDQDNDNKNQKKDS) are compositionally biased toward basic and acidic residues. Residues 614–647 (FAHDGQQKDSESGDQDNDNKNQKKDSNTPAPLDP) form a disordered region. A coiled-coil region spans residues 797–857 (LLVLTELAKM…ARLKGLEKEM (61 aa)).

It belongs to the YME2 family.

It localises to the mitochondrion inner membrane. Functionally, plays a role in maintaining the mitochondrial genome and in controlling the mtDNA escape. Involved in the regulation of mtDNA nucleotide structure and number. May have a dispensable role in early maturation of pre-rRNA. The protein is Mitochondrial escape protein 2 (msp-45) of Neurospora crassa (strain ATCC 24698 / 74-OR23-1A / CBS 708.71 / DSM 1257 / FGSC 987).